A 173-amino-acid chain; its full sequence is MNSKGSQNVATTCKPVTTFVQTDTNTFREIVQRLTGPTENNAAAATPEATVIKTAIQKRPTSKLHERRQCMRPKLEIVKPPLSFKPTGTTPSSKSGNTNLLTSPVGTPSSLFSNLSLIEGEPDSCTTNIEEEEKAIKERRFYLHPSPRSKPGYTEPELLTLFPLTSPNSSGKP.

The short motif at 27–36 is the VQ element; that stretch reads FREIVQRLTG. Position 46 is a phosphothreonine (Thr-46). Disordered stretches follow at residues 76–105 and 143–173; these read EIVK…TSPV and LHPS…SGKP. Residues 86–105 are compositionally biased toward polar residues; that stretch reads PTGTTPSSKSGNTNLLTSPV. 4 positions are modified to phosphoserine: Ser-92, Ser-103, Ser-146, and Ser-149. The span at 154–165 shows a compositional bias: low complexity; it reads TEPELLTLFPLT. Residue Thr-165 is modified to Phosphothreonine. Ser-166 and Ser-170 each carry phosphoserine.

Phosphorylated on serine and threonine residues by MPK6.

The protein resides in the nucleus. Its function is as follows. May modulate WRKY transcription factor activities. The chain is VQ motif-containing protein 31 from Arabidopsis thaliana (Mouse-ear cress).